We begin with the raw amino-acid sequence, 2049 residues long: Polyunsaturated fatty acid synthase subunit B (2049 aa).

2 consecutive Ketosynthase family 3 (KS3) domains span residues 15-442 (EKRI…VFEE) and 468-908 (NMRI…LLSD). Residues C196, H333, and H368 each act as for beta-ketoacyl synthase 1 activity in the active site. Residues 467–984 (NNMRIAITGM…LGETLAQEAD (518 aa)) form a chain length factor (CLF) domain region. The tract at residues 1044 to 1377 (RVAFMYGEGR…QRSHVTGAMD (334 aa)) is acyltransferase (AT) domain. Positions 1500–1531 (NKDNQPAVAPAATAAPTPKPKPAASSGKPVPS) are disordered. Positions 1505-1531 (PAVAPAATAAPTPKPKPAASSGKPVPS) are enriched in low complexity. Residues 1579–1887 (SRAFMKTYGV…SRANKLYELF (309 aa)) are enoyl reductase (ER) domain.

Component of the polyunsaturated fatty acid synthase complex composed of at least ORF-A, ORF-B and ORF-C.

It functions in the pathway lipid metabolism; fatty acid biosynthesis. In terms of biological role, poliketide synthase-like protein; part of the polyunsaturated fatty acid synthase composed of the 3 PKS-like subunits A, B and C. While the saturated fatty acids (SFAs) in Thraustochytrium are produced by the conventional fatty acid synthase (FAS) pathway, polyunsaturated fatty acids (PUFAs) including docosahexeanoic acid (DHA) and docosapentaenoic acid (DPA) are synthesized via an anaerobical PKS pathway. PUFA synthase assimilates fatty acyl-CoA, the product of FAS, as the starter unit to synthesize DPA, and this starter unit may be butyryl-CoA, hexanoyl-CoA, or octanoyl-CoA. DPA and DHA biosynthesis seem to differ by the reduction at the N-3 position by PUFA synthase, not the extension of carbon chain. In DHA biosynthesis, PUFA synthase extends the fatty acyl chain from the methyl toward the carboxyl end, and the double bond is formed when the carbon chain is growing, instead of afterward. Therefore, PUFA synthase is unable to transform DPA to DHA, suggesting that DPA is not the precursor of DHA. Moreover, DPA molecule is partly extended by FAS KS domain, so DPA biosynthesis is less dependent on PUFA synthase KS domain than DHA. The polypeptide is Polyunsaturated fatty acid synthase subunit B (Thraustochytrium sp. (strain ATCC 26185 / S-3)).